Reading from the N-terminus, the 407-residue chain is Imidazolonepropionase (407 aa).

Residues His74 and His76 each contribute to the Fe(3+) site. The Zn(2+) site is built by His74 and His76. 3 residues coordinate 4-imidazolone-5-propanoate: Arg83, Tyr146, and His179. Tyr146 contributes to the N-formimidoyl-L-glutamate binding site. Position 244 (His244) interacts with Fe(3+). His244 is a Zn(2+) binding site. Gln247 serves as a coordination point for 4-imidazolone-5-propanoate. Asp319 contacts Fe(3+). Asp319 is a binding site for Zn(2+). 2 residues coordinate N-formimidoyl-L-glutamate: Asn321 and Gly323. Thr324 serves as a coordination point for 4-imidazolone-5-propanoate.

It belongs to the metallo-dependent hydrolases superfamily. HutI family. Zn(2+) serves as cofactor. Fe(3+) is required as a cofactor.

The protein localises to the cytoplasm. It catalyses the reaction 4-imidazolone-5-propanoate + H2O = N-formimidoyl-L-glutamate. It functions in the pathway amino-acid degradation; L-histidine degradation into L-glutamate; N-formimidoyl-L-glutamate from L-histidine: step 3/3. Catalyzes the hydrolytic cleavage of the carbon-nitrogen bond in imidazolone-5-propanoate to yield N-formimidoyl-L-glutamate. It is the third step in the universal histidine degradation pathway. This Salmonella typhimurium (strain LT2 / SGSC1412 / ATCC 700720) protein is Imidazolonepropionase.